Consider the following 194-residue polypeptide: Large ribosomal subunit protein eL15 (194 aa).

The interval 162 to 194 (LTSAGRKSRGLRNKGKGAEKVRPSVRANKGKTK) is disordered. The segment covering 167–176 (RKSRGLRNKG) has biased composition (basic residues).

This sequence belongs to the eukaryotic ribosomal protein eL15 family.

This Thermococcus onnurineus (strain NA1) protein is Large ribosomal subunit protein eL15.